The sequence spans 207 residues: Transcriptional regulatory protein RcsA (207 aa).

Residues 131–196 (INLPTLSLSR…VIYHVVRLTD (66 aa)) form the HTH luxR-type domain. Positions 155-174 (TIQISDRMNIKAKTVSSHKG) form a DNA-binding region, H-T-H motif.

This sequence belongs to the RcsA family. As to quaternary structure, interacts with RcsB.

In terms of biological role, component of the Rcs signaling system, which controls transcription of numerous genes. Binds, with RcsB, to the RcsAB box to regulate expression of genes. In Salmonella typhimurium (strain LT2 / SGSC1412 / ATCC 700720), this protein is Transcriptional regulatory protein RcsA.